The primary structure comprises 271 residues: Fatty acid elongase A (271 aa).

A run of 7 helical transmembrane segments spans residues 35–55, 68–88, 102–122, 139–159, 165–185, 198–220, and 237–257; these read ILFP…LQIF, AMFH…GIVI, IICK…FYLS, SLLF…WANL, CQWV…FYYF, HITT…WHFY, and TSAF…QFFV.

Belongs to the ELO family.

It localises to the membrane. The catalysed reaction is a very-long-chain acyl-CoA + malonyl-CoA + H(+) = a very-long-chain 3-oxoacyl-CoA + CO2 + CoA. Its function is as follows. Fatty acid elongase with strict substrate specificity for monounsaturated fatty acids, in particular 16:1 (delta-9) to produce the unusual 18:1 (delta-11) fatty acid. The protein is Fatty acid elongase A (eloA) of Dictyostelium discoideum (Social amoeba).